A 385-amino-acid chain; its full sequence is Chaperone protein DnaJ 2 (385 aa).

The J domain maps to Asp-10 to Arg-75. The CR-type zinc finger occupies Gly-155 to Thr-233. Zn(2+) contacts are provided by Cys-168, Cys-171, Cys-185, Cys-188, Cys-207, Cys-210, Cys-221, and Cys-224. CXXCXGXG motif repeat units lie at residues Cys-168–Gly-175, Cys-185–Gly-192, Cys-207–Gly-214, and Cys-221–Gly-228.

This sequence belongs to the DnaJ family. As to quaternary structure, homodimer. It depends on Zn(2+) as a cofactor.

The protein resides in the cytoplasm. Functionally, participates actively in the response to hyperosmotic and heat shock by preventing the aggregation of stress-denatured proteins and by disaggregating proteins, also in an autonomous, DnaK-independent fashion. Unfolded proteins bind initially to DnaJ; upon interaction with the DnaJ-bound protein, DnaK hydrolyzes its bound ATP, resulting in the formation of a stable complex. GrpE releases ADP from DnaK; ATP binding to DnaK triggers the release of the substrate protein, thus completing the reaction cycle. Several rounds of ATP-dependent interactions between DnaJ, DnaK and GrpE are required for fully efficient folding. Also involved, together with DnaK and GrpE, in the DNA replication of plasmids through activation of initiation proteins. The polypeptide is Chaperone protein DnaJ 2 (Nocardia farcinica (strain IFM 10152)).